The following is a 426-amino-acid chain: Enolase (426 aa).

Residue Gln163 coordinates (2R)-2-phosphoglycerate. The Proton donor role is filled by Glu205. 3 residues coordinate Mg(2+): Asp242, Glu283, and Asp310. Residues Lys335, Arg364, Ser365, and Lys386 each contribute to the (2R)-2-phosphoglycerate site. The active-site Proton acceptor is the Lys335.

Belongs to the enolase family. Mg(2+) serves as cofactor.

Its subcellular location is the cytoplasm. The protein localises to the secreted. The protein resides in the cell surface. The catalysed reaction is (2R)-2-phosphoglycerate = phosphoenolpyruvate + H2O. The protein operates within carbohydrate degradation; glycolysis; pyruvate from D-glyceraldehyde 3-phosphate: step 4/5. Catalyzes the reversible conversion of 2-phosphoglycerate (2-PG) into phosphoenolpyruvate (PEP). It is essential for the degradation of carbohydrates via glycolysis. The polypeptide is Enolase (Paenarthrobacter aurescens (strain TC1)).